The primary structure comprises 253 residues: HTH-type transcriptional regulator YdeO (253 aa).

The HTH araC/xylS-type domain occupies 137–233 (GKVRNIVNMK…GNSPKRVSKE (97 aa)). 2 consecutive DNA-binding regions (H-T-H motif) follow at residues 154 to 175 (KDIC…KQEQ) and 200 to 223 (VNKI…RKHF).

Functionally, induces the expression of gadE and mdtEF. Could also regulate the expression of other genes involved in acid resistance. This chain is HTH-type transcriptional regulator YdeO (ydeO), found in Escherichia coli (strain K12).